Consider the following 1379-residue polypeptide: DNA-directed RNA polymerase subunit beta'' (1379 aa).

The Zn(2+) site is built by Cys-220, Cys-293, Cys-300, and Cys-303.

It belongs to the RNA polymerase beta' chain family. RpoC2 subfamily. As to quaternary structure, in plastids the minimal PEP RNA polymerase catalytic core is composed of four subunits: alpha, beta, beta', and beta''. When a (nuclear-encoded) sigma factor is associated with the core the holoenzyme is formed, which can initiate transcription. Requires Zn(2+) as cofactor.

Its subcellular location is the plastid. It localises to the chloroplast. It carries out the reaction RNA(n) + a ribonucleoside 5'-triphosphate = RNA(n+1) + diphosphate. Functionally, DNA-dependent RNA polymerase catalyzes the transcription of DNA into RNA using the four ribonucleoside triphosphates as substrates. The sequence is that of DNA-directed RNA polymerase subunit beta'' from Olimarabidopsis pumila (Dwarf rocket).